We begin with the raw amino-acid sequence, 211 residues long: Mediator of RNA polymerase II transcription subunit 18 (211 aa).

Belongs to the Mediator complex subunit 18 family. As to quaternary structure, component of the Mediator complex.

The protein resides in the nucleus. Its function is as follows. Component of the Mediator complex, a coactivator involved in the regulated transcription of nearly all RNA polymerase II-dependent genes. Mediator functions as a bridge to convey information from gene-specific regulatory proteins to the basal RNA polymerase II transcription machinery. Mediator is recruited to promoters by direct interactions with regulatory proteins and serves as a scaffold for the assembly of a functional preinitiation complex with RNA polymerase II and the general transcription factors. This is Mediator of RNA polymerase II transcription subunit 18 (MED18) from Anopheles gambiae (African malaria mosquito).